The following is a 234-amino-acid chain: MGGCVGAQHDSSGSLNENSEGTGVALGRNQPLKKEKPKWKSDYPMTDGQLRSKRDEFWDTAPAFEGRKEIWDALKAAAHAFESNDHELAQAIIDGANITLPHGALTECYDELGNRYQLPVYCLAPPINMIEEKSDIETLDIPEPPPNSGYESQLRLRLSTGKDLKLVVRSTDTVYHMKRRLHAAEGVEPASQRWFFSGRPLTDKMRLEELKIPKDYVVQVIMSQPLQNPTPVEN.

The tract at residues 1–46 (MGGCVGAQHDSSGSLNENSEGTGVALGRNQPLKKEKPKWKSDYPMT) is disordered. Residues 9-21 (HDSSGSLNENSEG) are compositionally biased toward polar residues. Residues 32 to 41 (LKKEKPKWKS) show a composition bias toward basic and acidic residues. One can recognise a Ubiquitin-like domain in the interval 152–227 (SQLRLRLSTG…VQVIMSQPLQ (76 aa)).

Its subcellular location is the cytoplasm. This is Ubiquitin domain-containing protein 2 (UBTD2) from Bos taurus (Bovine).